The chain runs to 649 residues: 2-hydroxyacyl-CoA lyase 2 (649 aa).

Residues 2 to 21 (FHLIPFVVAFLLVFLTWFLI) traverse the membrane as a helical segment. Residue E84 coordinates thiamine diphosphate. Residues 474–554 (DFVGSAAYIL…AIGVIGNDAC (81 aa)) are thiamine pyrophosphate binding. Mg(2+) is bound by residues D525 and N551.

It belongs to the TPP enzyme family. The cofactor is Mg(2+). It depends on thiamine diphosphate as a cofactor.

It localises to the endoplasmic reticulum membrane. The enzyme catalyses 2-hydroxyoctadecanoyl-CoA = heptadecanal + formyl-CoA. It carries out the reaction (2R)-hydroxyhexadecanoyl-CoA = pentadecanal + formyl-CoA. Endoplasmic reticulum 2-OH acyl-CoA lyase involved in the cleavage (C1 removal) reaction in the fatty acid alpha-oxydation in a thiamine pyrophosphate (TPP)-dependent manner. Involved in the phytosphingosine degradation pathway. In Xenopus laevis (African clawed frog), this protein is 2-hydroxyacyl-CoA lyase 2 (ilvbl).